The following is a 574-amino-acid chain: Egalitarian protein homolog (574 aa).

Residues 259-278 form a disordered region; the sequence is LNEDGSENGSDEGEETNNNG. Acidic residues predominate over residues 262–273; the sequence is DGSENGSDEGEE. The region spanning 312–414 is the 3'-5' exonuclease domain; the sequence is NMEKKVVGLD…SLLQHEKFNK (103 aa).

As to quaternary structure, component of a dynein-regulating complex composed of at least bicd-1, dlc-1 and egal-1.

It localises to the nucleus envelope. Its function is as follows. Part of a complex with bicd-1 and dlc-1, which is recruited to the nuclear envelope by unc-83, where in turn, it recruits dynein to the nuclear surface and regulates nuclear migration in hypodermal precursor cells. In Caenorhabditis elegans, this protein is Egalitarian protein homolog.